The sequence spans 256 residues: MKHYVLVHGGCHGAWCWYKVKPMLEHSGHRVTVFDLTAHGVNMSRVEDIQTLEDFAKPLLEVLESFGSDDKVVLVAHSLGGIPAALAADMFPSKISVAVFVTSFMPDTTNPPSYVFEKFLGSITEEERMDFELGSYGTDDHPLKTAFLGPNYLKNMYLLSPIEDYELAKMLMRVTPAITSNLTGTKSLTAQGYGSISRVYIVCGEDKGIRVDFQRWMIENSPVKEVMEIKDADHMPMFSKPHELCDRLLKIADKYP.

Serine 78 serves as the catalytic Acyl-ester intermediate. Residues aspartate 206 and histidine 234 each act as charge relay system in the active site.

This sequence belongs to the AB hydrolase superfamily. Methylesterase family.

The catalysed reaction is methyl (indol-3-yl)acetate + H2O = (indol-3-yl)acetate + methanol + H(+). It carries out the reaction methyl (-)-jasmonate + H2O = jasmonate + methanol + H(+). The enzyme catalyses methyl salicylate + H2O = salicylate + methanol + H(+). It participates in plant hormone biosynthesis. Its pathway is lipid metabolism; oxylipin biosynthesis. With respect to regulation, esterase activity is down-regulated by salicylic acid (SA). In terms of biological role, methylesterase shown to have carboxylesterase activity, methyl indole-3-acetic acid (MeIAA) esterase activity, methyl salicylate (MeSA) esterase activity and methyl jasmonate (MeJA) esterase activity in vitro. Required to convert methyl salicylate (MeSA) to salicylic acid (SA) as part of the signal transduction pathways that activate systemic acquired resistance in systemic tissue. MeSA is believed to be an inactive form that needs to be demethylated to exert a biological effect. In Arabidopsis thaliana (Mouse-ear cress), this protein is Methylesterase 9.